The primary structure comprises 400 residues: Queuine tRNA-ribosyltransferase catalytic subunit (400 aa).

Aspartate 89 serves as the catalytic Proton acceptor. Residues 89-93 (DSGGF), aspartate 143, glutamine 185, and glycine 212 each bind substrate. The RNA binding stretch occupies residues 243–249 (GVGFPVD). Residue aspartate 262 is the Nucleophile of the active site. Residues 267–271 (TRTAR) form an RNA binding; important for wobble base 34 recognition region. Cysteine 301, cysteine 303, cysteine 306, and histidine 331 together coordinate Zn(2+).

The protein belongs to the queuine tRNA-ribosyltransferase family. In terms of assembly, heterodimer of a catalytic subunit and an accessory subunit. It depends on Zn(2+) as a cofactor.

The protein resides in the cytoplasm. It carries out the reaction guanosine(34) in tRNA + queuine = queuosine(34) in tRNA + guanine. Its function is as follows. Catalytic subunit of the queuine tRNA-ribosyltransferase (TGT) that catalyzes the base-exchange of a guanine (G) residue with queuine (Q) at position 34 (anticodon wobble position) in tRNAs with GU(N) anticodons (tRNA-Asp, -Asn, -His and -Tyr), resulting in the hypermodified nucleoside queuosine (7-(((4,5-cis-dihydroxy-2-cyclopenten-1-yl)amino)methyl)-7-deazaguanosine). Catalysis occurs through a double-displacement mechanism. The nucleophile active site attacks the C1' of nucleotide 34 to detach the guanine base from the RNA, forming a covalent enzyme-RNA intermediate. The proton acceptor active site deprotonates the incoming queuine, allowing a nucleophilic attack on the C1' of the ribose to form the product. This chain is Queuine tRNA-ribosyltransferase catalytic subunit, found in Caenorhabditis elegans.